The primary structure comprises 82 residues: Small ribosomal subunit protein eS21 (82 aa).

This sequence belongs to the eukaryotic ribosomal protein eS21 family.

The sequence is that of Small ribosomal subunit protein eS21 (RPS21) from Oryza sativa subsp. japonica (Rice).